A 137-amino-acid chain; its full sequence is Phosphoribosyl-AMP cyclohydrolase (137 aa).

Aspartate 84 contacts Mg(2+). A Zn(2+)-binding site is contributed by cysteine 85. Positions 86 and 88 each coordinate Mg(2+). 2 residues coordinate Zn(2+): cysteine 101 and cysteine 108.

Belongs to the PRA-CH family. As to quaternary structure, homodimer. The cofactor is Mg(2+). Zn(2+) is required as a cofactor.

The protein resides in the cytoplasm. The enzyme catalyses 1-(5-phospho-beta-D-ribosyl)-5'-AMP + H2O = 1-(5-phospho-beta-D-ribosyl)-5-[(5-phospho-beta-D-ribosylamino)methylideneamino]imidazole-4-carboxamide. The protein operates within amino-acid biosynthesis; L-histidine biosynthesis; L-histidine from 5-phospho-alpha-D-ribose 1-diphosphate: step 3/9. Catalyzes the hydrolysis of the adenine ring of phosphoribosyl-AMP. The polypeptide is Phosphoribosyl-AMP cyclohydrolase (Chlorobium phaeovibrioides (strain DSM 265 / 1930) (Prosthecochloris vibrioformis (strain DSM 265))).